The chain runs to 312 residues: Small ribosomal subunit protein uS2 (312 aa).

Positions 232–312 (RASGAAERDE…AAPEGEAAAE (81 aa)) are disordered. Residues 245–284 (REGRDDRGDRRDDRRGPRRGDRRDDRRDRGGDRGGDRRGP) are compositionally biased toward basic and acidic residues. Over residues 291–312 (AAPVASAEPAAEAAPEGEAAAE) the composition is skewed to low complexity.

The protein belongs to the universal ribosomal protein uS2 family.

This chain is Small ribosomal subunit protein uS2, found in Myxococcus xanthus (strain DK1622).